We begin with the raw amino-acid sequence, 325 residues long: Elongation factor P--(R)-beta-lysine ligase (325 aa).

A substrate-binding site is contributed by 76–78; the sequence is SPE. ATP contacts are provided by residues 100–102 and asparagine 109; that span reads RNE. Tyrosine 118 is a substrate binding site. 244 to 245 lines the ATP pocket; it reads EL. Substrate is bound at residue glutamate 251. Glycine 300 lines the ATP pocket.

This sequence belongs to the class-II aminoacyl-tRNA synthetase family. EpmA subfamily. Homodimer.

The enzyme catalyses D-beta-lysine + L-lysyl-[protein] + ATP = N(6)-((3R)-3,6-diaminohexanoyl)-L-lysyl-[protein] + AMP + diphosphate + H(+). In terms of biological role, with EpmB is involved in the beta-lysylation step of the post-translational modification of translation elongation factor P (EF-P). Catalyzes the ATP-dependent activation of (R)-beta-lysine produced by EpmB, forming a lysyl-adenylate, from which the beta-lysyl moiety is then transferred to the epsilon-amino group of a conserved specific lysine residue in EF-P. This chain is Elongation factor P--(R)-beta-lysine ligase, found in Pectobacterium carotovorum subsp. carotovorum (strain PC1).